Consider the following 295-residue polypeptide: MADLDDIKEGKDFGIDRPQQNTLYTLKGCGSLDWGMQSRLARIFNPHSNRTVMLAFDHGYFQGPTTGLERIDLSIAPLFADTDVLMCTRGVLRSQVPAATNKPVVLRASGGNSILSELSNECVAVAMEDALRLNVCAVAAQVYIGSEYEHQSINNIIKLVDAGNRYGMPVLAVTGVGKEMTRDARYFSLASRIAAEMGAQFVKTYFVEEGFEKVTASCPVPIVIAGGKKLPEHEALEMCWRAIDQGASGVDMGRNIFQSSAPRAMLKAVKKVVHENLNAREAYQFWQEEKQGELK.

Lys203 serves as the catalytic Schiff-base intermediate with substrate.

It belongs to the DeoC/FbaB aldolase family. Homodecamer.

Its subcellular location is the cytoplasm. The enzyme catalyses dihydroxyacetone phosphate + acetyl-CoA = 3-hydroxy-2,4-dioxopentyl phosphate + CoA. Involved in the degradation of phospho-AI-2, thereby terminating induction of the lsr operon and closing the AI-2 signaling cycle. Catalyzes the transfer of an acetyl moiety from 3-hydroxy-5-phosphonooxypentane-2,4-dione to CoA to form glycerone phosphate and acetyl-CoA. The polypeptide is 3-hydroxy-5-phosphonooxypentane-2,4-dione thiolase (Klebsiella pneumoniae subsp. pneumoniae (strain ATCC 700721 / MGH 78578)).